The sequence spans 855 residues: Cytosolic phospholipase A2 zeta (855 aa).

Positions 27–145 (EKSEPQWKHR…QLGQPCTKNF (119 aa)) constitute a C2 domain. Ca(2+) is bound by residues D60, D66, D116, D118, and D123. In terms of domain architecture, PLA2c spans 304-855 (MSSSGDLDLR…RRQAGGRVGG (552 aa)). S393 functions as the Nucleophile in the catalytic mechanism. D685 serves as the catalytic Proton acceptor.

Ca(2+) is required as a cofactor. Strongly expressed in thyroid, expressed at intermediate level in stomach and at very low level in large intestine and prostate.

It localises to the cytoplasm. The protein localises to the cytosol. The protein resides in the cell membrane. Its subcellular location is the mitochondrion. It carries out the reaction a 1,2-diacyl-sn-glycero-3-phosphocholine + H2O = a 1-acyl-sn-glycero-3-phosphocholine + a fatty acid + H(+). The catalysed reaction is a 1-O-alkyl-2-acyl-sn-glycero-3-phosphocholine + H2O = a 1-O-alkyl-sn-glycero-3-phosphocholine + a fatty acid + H(+). It catalyses the reaction 1-hexadecanoyl-2-(9Z-octadecenoyl)-sn-glycero-3-phosphocholine + H2O = 2-(9Z-octadecenoyl)-sn-glycero-3-phosphocholine + hexadecanoate + H(+). The enzyme catalyses 1-hexadecanoyl-2-(9Z,12Z-octadecadienoyl)-sn-glycero-3-phosphocholine + H2O = (9Z,12Z)-octadecadienoate + 1-hexadecanoyl-sn-glycero-3-phosphocholine + H(+). It carries out the reaction 1-hexadecanoyl-2-(5Z,8Z,11Z,14Z-eicosatetraenoyl)-sn-glycero-3-phosphocholine + H2O = 1-hexadecanoyl-sn-glycero-3-phosphocholine + (5Z,8Z,11Z,14Z)-eicosatetraenoate + H(+). The catalysed reaction is 1-hexadecanoyl-2-(9Z,12Z-octadecadienoyl)-sn-glycero-3-phosphoethanolamine + H2O = 1-hexadecanoyl-sn-glycero-3-phosphoethanolamine + (9Z,12Z)-octadecadienoate + H(+). It catalyses the reaction 1-hexadecanoyl-2-(5Z,8Z,11Z,14Z-eicosatetraenoyl)-sn-glycero-3-phosphoethanolamine + H2O = 1-hexadecanoyl-sn-glycero-3-phosphoethanolamine + (5Z,8Z,11Z,14Z)-eicosatetraenoate + H(+). The enzyme catalyses 1-(5Z,8Z,11Z,14Z-eicosatetraenoyl)-2-O-hexadecyl-sn-glycero-3-phosphocholine + H2O = 2-O-hexadecyl-sn-glycero-3-phosphocholine + (5Z,8Z,11Z,14Z)-eicosatetraenoate + H(+). It carries out the reaction 1-O-hexadecyl-2-(5Z,8Z,11Z,14Z)-eicosatetraenoyl-sn-glycero-3-phosphocholine + H2O = 1-O-hexadecyl-sn-glycero-3-phosphocholine + (5Z,8Z,11Z,14Z)-eicosatetraenoate + H(+). The catalysed reaction is 1-hexadecanoyl-sn-glycero-3-phosphocholine + H2O = sn-glycerol 3-phosphocholine + hexadecanoate + H(+). With respect to regulation, stimulated by cytosolic Ca(2+). In terms of biological role, has calcium-dependent phospholipase and lysophospholipase activities with a potential role in membrane lipid remodeling and biosynthesis of lipid mediators. Preferentially hydrolyzes the ester bond of the fatty acyl group attached at sn-2 position of phospholipids (phospholipase A2 activity). Selectively hydrolyzes sn-2 arachidonoyl group from membrane phospholipids, providing the precursor for eicosanoid biosynthesis. In myocardial mitochondria, plays a major role in arachidonate release that is metabolically channeled to the formation of cardioprotective eicosanoids, epoxyeicosatrienoates (EETs). The polypeptide is Cytosolic phospholipase A2 zeta (Pla2g4f) (Mus musculus (Mouse)).